The primary structure comprises 201 residues: MAGKSSLFKIILLGDGGVGKSSLMNRYVTNKFDSQLFHTIGVEFLNKDLEVDGHFVTMQIWDTAGQERFRSLRTPFYRGSDCCLLTFSVDDSQSFQNLSNWKKEFIYYADVKEPESFPFVILGNKTDIKERQVSTEEAQAWCKDNGDYPYFETSAKDSTNVAAAFEEAVRRILATEDRSEHLIQTDTVNLHRKPKPNSSCC.

Alanine 2 bears the N-acetylalanine mark. Residues glycine 17, valine 18, glycine 19, lysine 20, serine 21, serine 22, aspartate 33, serine 34, histidine 38, and threonine 39 each coordinate GTP. Serine 21 provides a ligand contact to Mg(2+). Residues 31–42 (KFDSQLFHTIGV) carry the Switch 1 motif. Serine 34 bears the Phosphoserine mark. Positions 39 and 62 each coordinate Mg(2+). Residues 64-78 (AGQERFRSLRTPFYR) carry the Switch 2 motif. GTP-binding residues include glycine 65, asparagine 124, lysine 125, aspartate 127, alanine 155, and lysine 156. Serine 179 bears the Phosphoserine mark. Threonine 187 bears the Phosphothreonine mark. S-geranylgeranyl cysteine attachment occurs at residues cysteine 200 and cysteine 201.

It belongs to the small GTPase superfamily. Rab family. Interacts (preferentially in its GTP-bound form) with GCC2 (via its GRIP domain). Interacts (GTP-bound form) with SGSM1; the GDP-bound form has much lower affinity for SGSM1. Interacts with SGSM2. The GTP-bound form but not the GDP-bound form interacts with HPS4. The GTP-bound form but not the GDP-bound form interacts with BLOC-3 complex (heterodimer of HPS1 and HPS4) but does not interact with HPS1 alone. Interacts (GTP-bound form) with NDE1; two RAB9A-GTP molecules lie on the opposite sides of the NDE1 homodimer; the interaction leads to RAB9A-dynein motor tethering. Interacts (GTP-bound form) with NDEL1. Mg(2+) is required as a cofactor.

The protein localises to the cell membrane. It is found in the endoplasmic reticulum membrane. It localises to the golgi apparatus membrane. The protein resides in the late endosome. Its subcellular location is the cytoplasmic vesicle. The protein localises to the phagosome membrane. It is found in the phagosome. It localises to the cytoplasmic vesicle membrane. The protein resides in the melanosome. The catalysed reaction is GTP + H2O = GDP + phosphate + H(+). Its activity is regulated as follows. Regulated by guanine nucleotide exchange factors (GEFs) which promote the exchange of bound GDP for free GTP. Regulated by GTPase activating proteins (GAPs) which increase the GTP hydrolysis activity. Inhibited by GDP dissociation inhibitors (GDIs). The small GTPases Rab are key regulators of intracellular membrane trafficking, from the formation of transport vesicles to their fusion with membranes. Rabs cycle between an inactive GDP-bound form and an active GTP-bound form that is able to recruit to membranes different sets of downstream effectors directly responsible for vesicle formation, movement, tethering and fusion. RAB9A is involved in the transport of proteins between the endosomes and the trans-Golgi network (TGN). Specifically uses NDE1/NDEL1 as an effector to interact with the dynein motor complex in order to control retrograde trafficking of RAB9-associated late endosomes to the TGN. Involved in the recruitment of SGSM2 to melanosomes and is required for the proper trafficking of melanogenic enzymes TYR, TYRP1 and DCT/TYRP2 to melanosomes in melanocytes. This chain is Ras-related protein Rab-9A, found in Mus musculus (Mouse).